The following is a 332-amino-acid chain: Glycerol-3-phosphate dehydrogenase [NAD(P)+] (332 aa).

NADPH is bound by residues Ser11, Trp12, Arg32, Arg33, and Lys106. Positions 106 and 136 each coordinate sn-glycerol 3-phosphate. Position 140 (Ala140) interacts with NADPH. Sn-glycerol 3-phosphate contacts are provided by Lys191, Asp244, Ser254, Arg255, and Asn256. Catalysis depends on Lys191, which acts as the Proton acceptor. Arg255 contacts NADPH. Positions 280 and 282 each coordinate NADPH.

This sequence belongs to the NAD-dependent glycerol-3-phosphate dehydrogenase family.

The protein localises to the cytoplasm. The enzyme catalyses sn-glycerol 3-phosphate + NAD(+) = dihydroxyacetone phosphate + NADH + H(+). It catalyses the reaction sn-glycerol 3-phosphate + NADP(+) = dihydroxyacetone phosphate + NADPH + H(+). The protein operates within membrane lipid metabolism; glycerophospholipid metabolism. Catalyzes the reduction of the glycolytic intermediate dihydroxyacetone phosphate (DHAP) to sn-glycerol 3-phosphate (G3P), the key precursor for phospholipid synthesis. The polypeptide is Glycerol-3-phosphate dehydrogenase [NAD(P)+] (Corynebacterium glutamicum (strain R)).